The sequence spans 91 residues: MPRPALRSRSKKRKLVRTPGGRLALHVIDKKHDYPKCAICGRPIQGVPKLTSRLERRGVRMPTRPYGGYLCHECLRKGIKLSVWMSASKQE.

It belongs to the eukaryotic ribosomal protein eL34 family.

In Thermofilum pendens (strain DSM 2475 / Hrk 5), this protein is Large ribosomal subunit protein eL34.